The primary structure comprises 249 residues: Pyridoxine 5'-phosphate synthase (249 aa).

Residue Asn12 coordinates 3-amino-2-oxopropyl phosphate. Residue 14 to 15 coordinates 1-deoxy-D-xylulose 5-phosphate; it reads DH. Arg23 is a 3-amino-2-oxopropyl phosphate binding site. His48 functions as the Proton acceptor in the catalytic mechanism. The 1-deoxy-D-xylulose 5-phosphate site is built by Arg50 and His55. Residue Glu75 is the Proton acceptor of the active site. Thr105 contacts 1-deoxy-D-xylulose 5-phosphate. His199 (proton donor) is an active-site residue. 3-amino-2-oxopropyl phosphate-binding positions include Gly200 and 221-222; that span reads GH.

Belongs to the PNP synthase family. In terms of assembly, homooctamer; tetramer of dimers.

The protein localises to the cytoplasm. The catalysed reaction is 3-amino-2-oxopropyl phosphate + 1-deoxy-D-xylulose 5-phosphate = pyridoxine 5'-phosphate + phosphate + 2 H2O + H(+). It participates in cofactor biosynthesis; pyridoxine 5'-phosphate biosynthesis; pyridoxine 5'-phosphate from D-erythrose 4-phosphate: step 5/5. Catalyzes the complicated ring closure reaction between the two acyclic compounds 1-deoxy-D-xylulose-5-phosphate (DXP) and 3-amino-2-oxopropyl phosphate (1-amino-acetone-3-phosphate or AAP) to form pyridoxine 5'-phosphate (PNP) and inorganic phosphate. The polypeptide is Pyridoxine 5'-phosphate synthase (Roseobacter denitrificans (strain ATCC 33942 / OCh 114) (Erythrobacter sp. (strain OCh 114))).